A 411-amino-acid chain; its full sequence is Protein-lysine 6-oxidase (411 aa).

The N-terminal stretch at 1–21 (MRFAWTVLFLGQLQFCPLLRC) is a signal peptide. A propeptide spans 22-162 (APQAPREPPA…PPSHVDRMVG (141 aa)) (removed by BMP1). Positions 60–168 (PQRRRDSSAT…RMVGDDPYNP (109 aa)) are disordered. 2 N-linked (GlcNAc...) asparagine glycosylation sites follow: Asn91 and Asn138. Tyr181 bears the Sulfotyrosine mark. The interval 207–411 (PDLVPDPYYI…YASGCTISPY (205 aa)) is lysyl-oxidase like. Cystine bridges form between Cys232/Cys238, Cys285/Cys334, Cys318/Cys324, Cys345/Cys355, and Cys392/Cys406. Cu cation is bound by residues His286, His288, and His290. Positions 314 to 349 (KASFCLEDTSCDYGYHRRFACTAHTQGLSPGCYDTY) form a cross-link, lysine tyrosylquinone (Lys-Tyr). The residue at position 349 (Tyr349) is a 2',4',5'-topaquinone.

Belongs to the lysyl oxidase family. Interacts with MFAP4. Interacts (via propeptide) with EFEMP2; this interaction is strong and facilitates formation of ternary complexes with ELN during elastic fiber assembly; this interaction limits interaction of EFEMP2 with FBLN5. Cu cation serves as cofactor. The cofactor is lysine tyrosylquinone residue. In terms of processing, the lysine tyrosylquinone cross-link (LTQ) is generated by condensation of the epsilon-amino group of a lysine with a topaquinone produced by oxidation of tyrosine. Proteolytically cleaved by BMP1 which removes the propeptide. Also proteolytically cleaved by ADAMTS2 and ADAMTS14, but not by ADAMTS3, at an additional cleavage site downstream of the BMP1 cleavage site. The propeptide plays a role in directing the deposition of this enzyme to elastic fibers, via interaction with tropoelastin. Cleavage by BMP1 to remove the propeptide does not increase enzymatic activity but increases binding to collagen. Cleavage by ADAMTS2 produces a form with reduced collagen-binding activity. Post-translationally, sulfated at Tyr-181 and also at either Tyr-177 or Tyr-178 which enhances binding to collagen. In terms of tissue distribution, aorta and lung.

The protein localises to the secreted. The protein resides in the extracellular space. It carries out the reaction L-lysyl-[protein] + O2 + H2O = (S)-2-amino-6-oxohexanoyl-[protein] + H2O2 + NH4(+). In terms of biological role, responsible for the post-translational oxidative deamination of peptidyl lysine residues in precursors to fibrous collagen and elastin. Regulator of Ras expression. May play a role in tumor suppression. Plays a role in the aortic wall architecture. The polypeptide is Protein-lysine 6-oxidase (Rattus norvegicus (Rat)).